Reading from the N-terminus, the 222-residue chain is Phosphoribosylformylglycinamidine synthase subunit PurQ (222 aa).

In terms of domain architecture, Glutamine amidotransferase type-1 spans 3-222; it reads AAVLVFPGSN…ASLAAALVAA (220 aa). The active-site Nucleophile is the Cys-86. Active-site residues include His-194 and Glu-196.

As to quaternary structure, part of the FGAM synthase complex composed of 1 PurL, 1 PurQ and 2 PurS subunits.

It localises to the cytoplasm. It carries out the reaction N(2)-formyl-N(1)-(5-phospho-beta-D-ribosyl)glycinamide + L-glutamine + ATP + H2O = 2-formamido-N(1)-(5-O-phospho-beta-D-ribosyl)acetamidine + L-glutamate + ADP + phosphate + H(+). The enzyme catalyses L-glutamine + H2O = L-glutamate + NH4(+). Its pathway is purine metabolism; IMP biosynthesis via de novo pathway; 5-amino-1-(5-phospho-D-ribosyl)imidazole from N(2)-formyl-N(1)-(5-phospho-D-ribosyl)glycinamide: step 1/2. Its function is as follows. Part of the phosphoribosylformylglycinamidine synthase complex involved in the purines biosynthetic pathway. Catalyzes the ATP-dependent conversion of formylglycinamide ribonucleotide (FGAR) and glutamine to yield formylglycinamidine ribonucleotide (FGAM) and glutamate. The FGAM synthase complex is composed of three subunits. PurQ produces an ammonia molecule by converting glutamine to glutamate. PurL transfers the ammonia molecule to FGAR to form FGAM in an ATP-dependent manner. PurS interacts with PurQ and PurL and is thought to assist in the transfer of the ammonia molecule from PurQ to PurL. In Jannaschia sp. (strain CCS1), this protein is Phosphoribosylformylglycinamidine synthase subunit PurQ.